Here is a 618-residue protein sequence, read N- to C-terminus: Auxin efflux carrier component 3a (618 aa).

Residues 1-6 (MISGHD) are Extracellular-facing. Residues 7 to 27 (FYTVMAAVVPLYVAMFLAYGS) traverse the membrane as a helical segment. The Cytoplasmic portion of the chain corresponds to 28-38 (VRWWGIFTPDQ). A helical transmembrane segment spans residues 39–59 (CSGINRFVAIFAVPLLSFHFI). Residue V51 coordinates (indol-3-yl)acetate. Residues 60-70 (STNDPYAMNLR) are Extracellular-facing. The chain crosses the membrane as a helical span at residues 71 to 90 (FLAADTLQKLLVLAGLAAWS). At 91–104 (RLPSRTGAPRLDWS) the chain is on the cytoplasmic side. The chain crosses the membrane as a helical span at residues 105–125 (ITLFSLSTLPNTLVMGIPLLI). N115 and L117 together coordinate (indol-3-yl)acetate. Residues 126–134 (AMYGPYSGS) are Extracellular-facing. The helical transmembrane segment at 135 to 155 (LMVQIVVLQCIIWYTLMLFLF) threads the bilayer. Y148 serves as a coordination point for (indol-3-yl)acetate. Residues 156-478 (EFRAARMLIA…LIRNPNTYSS (323 aa)) lie on the Cytoplasmic side of the membrane. Over residues 281–293 (SLQSSRGPTPRQS) the composition is skewed to polar residues. The disordered stretch occupies residues 281-312 (SLQSSRGPTPRQSNFDEHSARPPKPPATTTGA). Residues 479-499 (LLGLAWSLVAFRWHVSMPAIV) form a helical membrane-spanning segment. The Extracellular segment spans residues 500 to 502 (EKS). The helical transmembrane segment at 503-523 (ISILSDAGLGMAMFSLGLFMA) threads the bilayer. The Cytoplasmic segment spans residues 524-539 (LQPSIIACGKSAAVVS). A helical transmembrane segment spans residues 540 to 560 (MAVRFLAGPAVMAAASIAIGL). Residues 561–563 (RGT) are Extracellular-facing. Residues 564–584 (LLHVAIVQAALPQGIVPFVFA) traverse the membrane as a helical segment. (indol-3-yl)acetate is bound by residues I578 and V579. Topologically, residues 585 to 597 (KEYNVHPAILSTA) are cytoplasmic. The chain crosses the membrane as a helical span at residues 598 to 618 (VIFGMLIALPITLLYYILLGL).

This sequence belongs to the auxin efflux carrier (TC 2.A.69.1) family. Homodimer. In terms of tissue distribution, expressed in coleoptiles, roots, vascular bundles of leaves, shoots, lamina joints and vascular bundles of the lemma and filament. Expressed in stem bases, stems, leaves and young panicles.

Its subcellular location is the cell membrane. Acts as a component of the auxin efflux carrier. Involved in the polar auxin transport which may regulate crown root development and response to water stress. This is Auxin efflux carrier component 3a from Oryza sativa subsp. japonica (Rice).